Here is a 324-residue protein sequence, read N- to C-terminus: Acetyl-coenzyme A carboxylase carboxyl transferase subunit alpha (324 aa).

The CoA carboxyltransferase C-terminal domain maps to 37–291 (ILEDKLENLE…NVVLQKTFEQ (255 aa)).

This sequence belongs to the AccA family. In terms of assembly, acetyl-CoA carboxylase is a heterohexamer composed of biotin carboxyl carrier protein (AccB), biotin carboxylase (AccC) and two subunits each of ACCase subunit alpha (AccA) and ACCase subunit beta (AccD).

It is found in the cytoplasm. The catalysed reaction is N(6)-carboxybiotinyl-L-lysyl-[protein] + acetyl-CoA = N(6)-biotinyl-L-lysyl-[protein] + malonyl-CoA. Its pathway is lipid metabolism; malonyl-CoA biosynthesis; malonyl-CoA from acetyl-CoA: step 1/1. Functionally, component of the acetyl coenzyme A carboxylase (ACC) complex. First, biotin carboxylase catalyzes the carboxylation of biotin on its carrier protein (BCCP) and then the CO(2) group is transferred by the carboxyltransferase to acetyl-CoA to form malonyl-CoA. This chain is Acetyl-coenzyme A carboxylase carboxyl transferase subunit alpha, found in Bacillus cytotoxicus (strain DSM 22905 / CIP 110041 / 391-98 / NVH 391-98).